The following is a 281-amino-acid chain: Small ribosomal subunit protein uS3 (281 aa).

The 69-residue stretch at 38-106 folds into the KH type-2 domain; sequence IRRLLSTGLE…QVQLNILEVK (69 aa). The segment at 218-281 is disordered; sequence APAGAERARR…VTHEPQIAES (64 aa). A compositionally biased stretch (low complexity) spans 238 to 252; sequence SGAAGTTVTGTDAGR.

This sequence belongs to the universal ribosomal protein uS3 family. In terms of assembly, part of the 30S ribosomal subunit. Forms a tight complex with proteins S10 and S14.

In terms of biological role, binds the lower part of the 30S subunit head. Binds mRNA in the 70S ribosome, positioning it for translation. In Mycobacterium leprae (strain TN), this protein is Small ribosomal subunit protein uS3.